Consider the following 604-residue polypeptide: Linalool synthase Tps-5042L13, chloroplastic (604 aa).

The N-terminal 34 residues, 1 to 34 (MSSMRIYVAIMKKPSVKHVDNVDKKASKPSWRVS), are a transit peptide targeting the chloroplast. The (2E)-geranyl diphosphate site is built by Arg323, Asp360, Asp364, Arg501, and Asp504. Residues Asp360 and Asp364 each contribute to the Mg(2+) site. A DDXXD motif motif is present at residues 360–364 (DDVYD). Residues Asp504, Thr508, and Glu512 each contribute to the Mg(2+) site.

Belongs to the terpene synthase family. Tpsb subfamily. In terms of assembly, monomer. Requires Mg(2+) as cofactor. It depends on Mn(2+) as a cofactor.

The protein localises to the plastid. Its subcellular location is the chloroplast. The enzyme catalyses (2E)-geranyl diphosphate + H2O = linalool + diphosphate. It functions in the pathway secondary metabolite biosynthesis; terpenoid biosynthesis. Monoterpene synthase (mono-TPS) involved in the biosynthesis of monoterpenes natural products. Catalyzes the conversion of (2E)-geranyl diphosphate (GPP) into linalool. The protein is Linalool synthase Tps-5042L13, chloroplastic of Perilla frutescens (Beefsteak mint).